The primary structure comprises 233 residues: Biosynthetic peptidoglycan transglycosylase (233 aa).

Residues 4–24 (LAYLAGCLIVGVVAMQVYFFL) form a helical membrane-spanning segment.

It belongs to the glycosyltransferase 51 family.

It localises to the cell inner membrane. The catalysed reaction is [GlcNAc-(1-&gt;4)-Mur2Ac(oyl-L-Ala-gamma-D-Glu-L-Lys-D-Ala-D-Ala)](n)-di-trans,octa-cis-undecaprenyl diphosphate + beta-D-GlcNAc-(1-&gt;4)-Mur2Ac(oyl-L-Ala-gamma-D-Glu-L-Lys-D-Ala-D-Ala)-di-trans,octa-cis-undecaprenyl diphosphate = [GlcNAc-(1-&gt;4)-Mur2Ac(oyl-L-Ala-gamma-D-Glu-L-Lys-D-Ala-D-Ala)](n+1)-di-trans,octa-cis-undecaprenyl diphosphate + di-trans,octa-cis-undecaprenyl diphosphate + H(+). It participates in cell wall biogenesis; peptidoglycan biosynthesis. Peptidoglycan polymerase that catalyzes glycan chain elongation from lipid-linked precursors. This Cupriavidus metallidurans (strain ATCC 43123 / DSM 2839 / NBRC 102507 / CH34) (Ralstonia metallidurans) protein is Biosynthetic peptidoglycan transglycosylase.